A 225-amino-acid polypeptide reads, in one-letter code: Ribosomal RNA large subunit methyltransferase E (225 aa).

The S-adenosyl-L-methionine site is built by Gly-79, Trp-81, Asp-97, Asp-113, and Asp-137. Catalysis depends on Lys-177, which acts as the Proton acceptor.

This sequence belongs to the class I-like SAM-binding methyltransferase superfamily. RNA methyltransferase RlmE family.

The protein localises to the cytoplasm. It catalyses the reaction uridine(2552) in 23S rRNA + S-adenosyl-L-methionine = 2'-O-methyluridine(2552) in 23S rRNA + S-adenosyl-L-homocysteine + H(+). Its function is as follows. Specifically methylates the uridine in position 2552 of 23S rRNA at the 2'-O position of the ribose in the fully assembled 50S ribosomal subunit. This chain is Ribosomal RNA large subunit methyltransferase E, found in Acidiphilium cryptum (strain JF-5).